We begin with the raw amino-acid sequence, 208 residues long: Probable GTP-binding protein EngB (208 aa).

The region spanning 22–195 is the EngB-type G domain; the sequence is GLPEIALAGR…WGALEDIFVE (174 aa). GTP-binding positions include 30–37, 57–61, 75–78, 142–145, and 174–176; these read GRSNVGKS, GKTRT, DLPG, TKSD, and ISS. Mg(2+) is bound by residues serine 37 and threonine 59.

This sequence belongs to the TRAFAC class TrmE-Era-EngA-EngB-Septin-like GTPase superfamily. EngB GTPase family. It depends on Mg(2+) as a cofactor.

Functionally, necessary for normal cell division and for the maintenance of normal septation. This Alkaliphilus metalliredigens (strain QYMF) protein is Probable GTP-binding protein EngB.